The primary structure comprises 181 residues: Translation initiation factor IF-3 (181 aa).

It belongs to the IF-3 family. Monomer.

It localises to the cytoplasm. Functionally, IF-3 binds to the 30S ribosomal subunit and shifts the equilibrium between 70S ribosomes and their 50S and 30S subunits in favor of the free subunits, thus enhancing the availability of 30S subunits on which protein synthesis initiation begins. This is Translation initiation factor IF-3 from Azotobacter vinelandii.